Here is a 479-residue protein sequence, read N- to C-terminus: Poly(A) polymerase catalytic subunit (479 aa).

Residues Asp202 and Asp204 contribute to the active site. Ca(2+) is bound by residues Asp202, Asp204, and Asp253.

The protein belongs to the poxviridae poly(A) polymerase catalytic subunit family. In terms of assembly, heterodimer of a large (catalytic) subunit and a small (regulatory) subunit.

The enzyme catalyses RNA(n) + ATP = RNA(n)-3'-adenine ribonucleotide + diphosphate. Polymerase that creates the 3'-poly(A) tail of mRNA's. This Camelus protein is Poly(A) polymerase catalytic subunit (OPG063).